A 217-amino-acid polypeptide reads, in one-letter code: Membrane-associated progesterone receptor component 2 (217 aa).

An O-linked (Xyl...) (chondroitin sulfate) serine glycan is attached at Ser15. Residues 40–62 (ALLATGGEMLLNVALVALVLLGA) traverse the membrane as a helical segment. A phosphoserine mark is found at Ser84, Ser98, and Ser202. The region spanning 96–195 (DFSLEQLRQY…EKYDYVGRLL (100 aa)) is the Cytochrome b5 heme-binding domain. The segment at 196–217 (KPGEEPSEYTDEEDTKDHSKQD) is disordered. A compositionally biased stretch (acidic residues) spans 200 to 209 (EPSEYTDEED). A Phosphotyrosine modification is found at Tyr204. Thr205 bears the Phosphothreonine mark.

It belongs to the cytochrome b5 family. MAPR subfamily. In terms of assembly, interacts with PGRMC1. Interacts with AAAS.

The protein resides in the membrane. Its subcellular location is the nucleus envelope. The protein localises to the endoplasmic reticulum. It localises to the secreted. In terms of biological role, required for the maintenance of uterine histoarchitecture and normal female reproductive lifespan. May serve as a universal non-classical progesterone receptor in the uterus. Intracellular heme chaperone required for delivery of labile, or signaling heme, to the nucleus. Plays a role in adipocyte function and systemic glucose homeostasis. In brown fat, which has a high demand for heme, delivery of labile heme in the nucleus regulates the activity of heme-responsive transcriptional repressors such as NR1D1 and BACH1. The sequence is that of Membrane-associated progesterone receptor component 2 from Rattus norvegicus (Rat).